Consider the following 339-residue polypeptide: Deubiquitinase and deneddylase Dub2 (339 aa).

Residues 36 to 56 form a helical membrane-spanning segment; sequence IIIALFLIVISCGLILCAYTF. Active-site residues include H203, D220, and C282.

Belongs to the peptidase C48 family.

Its subcellular location is the secreted. The protein localises to the host cell. It is found in the membrane. Functionally, effector proteins function to alter host cell physiology and promote bacterial survival in host tissues. This protease possesses deubiquitinating and deneddylating activities. In Chlamydia trachomatis serovar D (strain ATCC VR-885 / DSM 19411 / UW-3/Cx), this protein is Deubiquitinase and deneddylase Dub2 (cdu2).